The chain runs to 147 residues: Hemoglobin subunit beta-1/2 (147 aa).

Val2 is subject to N-acetylvaline. In terms of domain architecture, Globin spans His3–His147. A Phosphothreonine modification is found at Thr13. Ser45 carries the post-translational modification Phosphoserine. Lys60 is modified (N6-acetyllysine). His64 provides a ligand contact to heme b. Residue Lys83 is modified to N6-acetyllysine. His93 is a binding site for heme b. Cys94 bears the S-nitrosocysteine mark. Lys145 is subject to N6-acetyllysine.

Belongs to the globin family. As to quaternary structure, heterotetramer of two alpha chains and two beta chains. As to expression, red blood cells.

In terms of biological role, involved in oxygen transport from the lung to the various peripheral tissues. This chain is Hemoglobin subunit beta-1/2 (HBB1), found in Oryctolagus cuniculus (Rabbit).